A 1098-amino-acid chain; its full sequence is Tudor domain-containing protein 7 (1098 aa).

Residues 3-76 (EGDLVSKMLR…SGEITCYAMA (74 aa)) form the HTH OST-type 1 domain. Residues 129–156 (ASNFSVGKKPNPAPLRDKGNSVGVKPDA) are disordered. Positions 233–302 (KMDEVQNRIK…GQDLLLYPAK (70 aa)) constitute an HTH OST-type 2 domain. At Ser-319 the chain carries Phosphoserine. The region spanning 337 to 406 (MAGDFKEKVA…PQKAILYAKL (70 aa)) is the HTH OST-type 3 domain. Tudor domains lie at 513 to 570 (AVNV…FCSL) and 703 to 760 (LPFC…FLQE). The disordered stretch occupies residues 855-874 (SGADSPNSKNGNMPMSGNTG). Ser-859 bears the Phosphoserine mark. An interaction with CDK17 region spans residues 861-1098 (NSKNGNMPMS…EYLIELSKVN (238 aa)). The segment at 893-1098 (TSAFSTEELP…EYLIELSKVN (206 aa)) is interaction with CABLES1.

Belongs to the TDRD7 family. Found in a mRNP complex, at least composed of TDRD1, TDRD6, TDRD7 and DDX4. Found in a complex containing CABLES1, CDK16 and CDK17. Interacts with CABLES1, CDK17 and PIWIL1.

The protein resides in the cytoplasm. Functionally, component of specific cytoplasmic RNA granules involved in post-transcriptional regulation of specific genes: probably acts by binding to specific mRNAs and regulating their translation. Required for lens transparency during lens development, by regulating translation of genes such as CRYBB3 and HSPB1 in the developing lens. Also required during spermatogenesis. The protein is Tudor domain-containing protein 7 (TDRD7) of Homo sapiens (Human).